We begin with the raw amino-acid sequence, 1019 residues long: DNA topoisomerase 1 (1019 aa).

The disordered stretch occupies residues 1–160 (MNSIQVKNEP…KTMSITGSGE (160 aa)). A compositionally biased stretch (basic and acidic residues) spans 46–56 (KPLAKRPKVED). Residues 62 to 78 (PLTSTVSSQNGVQKRSG) are compositionally biased toward polar residues. Composition is skewed to acidic residues over residues 83-93 (DDNDDDSDSDS) and 107-136 (SDDD…DDDD). 3 interaction with DNA regions span residues 379-380 (KY), 442-447 (RAGNEK), and 556-558 (SAK). A Topo IB-type catalytic domain is found at 386–860 (TSNFKTNSDR…KKVKKEEEEN (475 aa)). Positions 716-737 (EQKGLTGDDGTPKKGKKAKNVE) are disordered. Tyrosine 822 (O-(3'-phospho-DNA)-tyrosine intermediate) is an active-site residue. Disordered regions lie at residues 843–890 (GQGK…TGDS) and 940–1019 (MRKL…AAVV). Basic and acidic residues predominate over residues 854–863 (KKEEEENDIK). Residues 864–879 (PKKKDAKGAASKKRAA) are compositionally biased toward basic residues. Composition is skewed to basic and acidic residues over residues 940-950 (MRKLDSAERKG) and 980-996 (TSAD…VDKT). Residues 997–1012 (EESDDDLSSDSSDDED) are compositionally biased toward acidic residues.

It belongs to the type IB topoisomerase family. As to quaternary structure, monomer.

It catalyses the reaction ATP-independent breakage of single-stranded DNA, followed by passage and rejoining.. Releases the supercoiling and torsional tension of DNA introduced during the DNA replication and transcription by transiently cleaving and rejoining one strand of the DNA duplex. Introduces a single-strand break via transesterification at a target site in duplex DNA. The scissile phosphodiester is attacked by the catalytic tyrosine of the enzyme, resulting in the formation of a DNA-(3'-phosphotyrosyl)-enzyme intermediate and the expulsion of a 5'-OH DNA strand. The free DNA strand then rotates around the intact phosphodiester bond on the opposing strand, thus removing DNA supercoils. Finally, in the religation step, the DNA 5'-OH attacks the covalent intermediate to expel the active-site tyrosine and restore the DNA phosphodiester backbone. The polypeptide is DNA topoisomerase 1 (TOP1) (Mycosarcoma maydis (Corn smut fungus)).